Consider the following 264-residue polypeptide: uncharacterized protein (264 aa).

Residue 13-20 participates in NADP(+) binding; that stretch reads TGSTSGIG. Serine 141 is a binding site for substrate. Catalysis depends on tyrosine 154, which acts as the Proton acceptor.

The protein belongs to the short-chain dehydrogenases/reductases (SDR) family.

This is an uncharacterized protein from Bacillus subtilis (strain 168).